Consider the following 305-residue polypeptide: Aspartate carbamoyltransferase catalytic subunit (305 aa).

Residues R60 and T61 each contribute to the carbamoyl phosphate site. K88 contacts L-aspartate. Carbamoyl phosphate-binding residues include R110, H138, and Q141. L-aspartate is bound by residues R171 and R222. Carbamoyl phosphate is bound by residues A263 and P264.

This sequence belongs to the aspartate/ornithine carbamoyltransferase superfamily. ATCase family. Heterododecamer (2C3:3R2) of six catalytic PyrB chains organized as two trimers (C3), and six regulatory PyrI chains organized as three dimers (R2).

The enzyme catalyses carbamoyl phosphate + L-aspartate = N-carbamoyl-L-aspartate + phosphate + H(+). Its pathway is pyrimidine metabolism; UMP biosynthesis via de novo pathway; (S)-dihydroorotate from bicarbonate: step 2/3. Functionally, catalyzes the condensation of carbamoyl phosphate and aspartate to form carbamoyl aspartate and inorganic phosphate, the committed step in the de novo pyrimidine nucleotide biosynthesis pathway. This chain is Aspartate carbamoyltransferase catalytic subunit, found in Halalkalibacterium halodurans (strain ATCC BAA-125 / DSM 18197 / FERM 7344 / JCM 9153 / C-125) (Bacillus halodurans).